A 315-amino-acid polypeptide reads, in one-letter code: GPN-loop GTPase 2 (315 aa).

Glycine 12 to threonine 17 contacts GTP. Positions glycine 69 to asparagine 71 match the Gly-Pro-Asn (GPN)-loop; involved in dimer interface motif. Residue serine 172–aspartate 175 coordinates GTP.

This sequence belongs to the GPN-loop GTPase family. Heterodimers with gpn1 or fet5/gpn3. Binds to RNA polymerase II (RNAPII).

It localises to the cytoplasm. The protein localises to the nucleus. Functionally, small GTPase required for proper nuclear import of RNA polymerase II and III (RNAPII and RNAPIII). May act at an RNAP assembly step prior to nuclear import. The chain is GPN-loop GTPase 2 from Schizosaccharomyces pombe (strain 972 / ATCC 24843) (Fission yeast).